The following is a 1093-amino-acid chain: Regulatory protein SWI4 (1093 aa).

The 111-residue stretch at 37–147 folds into the HTH APSES-type domain; sequence IEIATYSETD…FQFDPNNPPP (111 aa). The segment at residues 71–92 is a DNA-binding region (H-T-H motif); the sequence is ITQVFKIAQFSKTKRTKILEKE. Residues 138 to 210 form a disordered region; sequence FQFDPNNPPP…NQPNPSPLQN (73 aa). A compositionally biased stretch (polar residues) spans 152 to 172; sequence NSILRKTSPGTKITSPSSYNK. The segment covering 179 to 201 has biased composition (low complexity); sequence SSSSTSATTTAANKKGKKNASIN. Ser255 carries the post-translational modification Phosphoserine. Over residues 448 to 457 the composition is skewed to low complexity; that stretch reads NSMNMSSRSM. Positions 448-468 are disordered; the sequence is NSMNMSSRSMTPFSAGNTSSQ. The span at 458-468 shows a compositional bias: polar residues; that stretch reads TPFSAGNTSSQ. ANK repeat units lie at residues 520-549 and 641-670; these read QGHT…NALQ and IGNT…STDI. Position 806 is a phosphoserine (Ser806). Disordered stretches follow at residues 813 to 855 and 973 to 1017; these read RSQS…SSLL and QDEE…DAKF. The segment covering 818–837 has biased composition (basic and acidic residues); it reads SDEKEKAKDNENQVEKKKDP. Residues 846-855 are compositionally biased toward low complexity; sequence PSLESPSSLL. Over residues 1000–1010 the composition is skewed to polar residues; it reads KSTSETSSPKN.

Component of the transcription complex SCB-binding factor (SBF) composed of SWI6 and SWI4. Interacts with MSA2.

In terms of biological role, part of a complex involved in cell-cycle-dependent transcription. SWI4 and SWI6 are required for formation of the cell-cycle box factor-DNA complex. The repeated element in the upstream region of HO (5'-CACGAAAA-3') is called the cell cycle box (CCB). In Saccharomyces cerevisiae (strain ATCC 204508 / S288c) (Baker's yeast), this protein is Regulatory protein SWI4 (SWI4).